The following is a 536-amino-acid chain: MPGFYEIVIKVPSDLDGHLPGISDSFVNWVAEKEWELPPDSDMDLNLIEQAPLTVAEKLQRDFLTEWRRVSKAPEALFFVQFEKGESYFHMHVLVETTGVKSMVLGRFLSQIREKLIQRIYRGIEPTLPNWFAVTKTRNGAGGGNKVVDECYIPNYLLPKTQPELQWAWTNMEQYLSACLNLTERKRLVAQHLTHVSQTQEQNKENQNPNSDAPVIRSKTSARYMELVGWLVDKGITSEKQWIQEDQASYISFNAASNSRSQIKAALDNAGKIMSLTKTAPDYLVGQQPVEDISSNRIYKILELNGYDPQYAASVFLGWATKKFGKRNTIWLFGPATTGKTNIAEAIAHTVPFYGCVNWTNENFPFNDCVDKMVIWWEEGKMTAKVVESAKAILGGSKVRVDQKCKSSAQIDPTPVIVTSNTNMCAVIDGNSTTFEHQQPLQDRMFKFELTRRLDHDFGKVTKQEVKDFFRWAKDHVVEVEHEFYVKKGGAKKRPAPSDADISEPKRVRESVAQPSTSDAEASINYADRLARGHSL.

The region spanning 1-199 is the PV NS1-Nuc domain; sequence MPGFYEIVIK…AQHLTHVSQT (199 aa). Residues Glu-83, His-90, and His-92 each coordinate a divalent metal cation. The short motif at 90 to 92 is the RCR-2 element; that stretch reads HMH. The For nuclease activity role is filled by Tyr-156. Residues 156–160 carry the RCR-3 motif; the sequence is YLLPK. The span at 196 to 211 shows a compositional bias: polar residues; that stretch reads VSQTQEQNKENQNPNS. Residues 196-216 are disordered; that stretch reads VSQTQEQNKENQNPNSDAPVI. In terms of domain architecture, SF3 helicase spans 308-463; the sequence is DPQYAASVFL…LDHDFGKVTK (156 aa). 334 to 341 serves as a coordination point for ATP; that stretch reads GPATTGKT. A disordered region spans residues 488–536; that stretch reads KGGAKKRPAPSDADISEPKRVRESVAQPSTSDAEASINYADRLARGHSL.

Interacts with host TOPORS. Interacts with host KCTD5. It depends on a divalent metal cation as a cofactor.

Its subcellular location is the host nucleus. It catalyses the reaction ATP + H2O = ADP + phosphate + H(+). Functionally, plays an essential role in the initiation of viral DNA synthesis. Binds specifically to an inverted terminal repeat element (ITR) on the 3' and 5' ends of the viral DNA, where it cleaves a site specifically to generate a priming site for initiation of the synthesis of a complementary strand. Also plays a role as transcriptional regulator, DNA helicase and as key factor in site-specific integration of the viral genome. Inhibits the host cell cycle G1/S and G2/M transitions. These arrests may provide essential cellular factors for viral DNA replication. The protein is Protein Rep68 (Rep68) of Mammalia (AAV-2).